A 128-amino-acid chain; its full sequence is uncharacterized protein (128 aa).

Residues 25–61 (LPNRLPEGSTVGPKPDSSWEAGSQGNWGLTSSGAGQD) are disordered. Positions 44-61 (EAGSQGNWGLTSSGAGQD) are enriched in polar residues.

This is an uncharacterized protein from Homo sapiens (Human).